A 191-amino-acid polypeptide reads, in one-letter code: ATP-dependent Clp protease proteolytic subunit 1 (191 aa).

The Nucleophile role is filled by serine 91. Residue histidine 116 is part of the active site.

Belongs to the peptidase S14 family. As to quaternary structure, fourteen ClpP subunits assemble into 2 heptameric rings which stack back to back to give a disk-like structure with a central cavity, resembling the structure of eukaryotic proteasomes.

It localises to the cytoplasm. The catalysed reaction is Hydrolysis of proteins to small peptides in the presence of ATP and magnesium. alpha-casein is the usual test substrate. In the absence of ATP, only oligopeptides shorter than five residues are hydrolyzed (such as succinyl-Leu-Tyr-|-NHMec, and Leu-Tyr-Leu-|-Tyr-Trp, in which cleavage of the -Tyr-|-Leu- and -Tyr-|-Trp bonds also occurs).. In terms of biological role, cleaves peptides in various proteins in a process that requires ATP hydrolysis. Has a chymotrypsin-like activity. Plays a major role in the degradation of misfolded proteins. The polypeptide is ATP-dependent Clp protease proteolytic subunit 1 (Chlamydia pneumoniae (Chlamydophila pneumoniae)).